The chain runs to 350 residues: Chlorophyll a/b light-harvesting protein PcbA (350 aa).

Transmembrane regions (helical) follow at residues 26–46 (LSAH…ITLF), 62–82 (LILI…GQVV), 87–107 (YFVI…GALY), 214–234 (IAVV…FPWA), 248–268 (LSAS…FSAV), and 309–329 (LCNV…WHAL).

Belongs to the PsbB/PsbC family. IsiA/Pcb subfamily. In terms of assembly, the antenna complex consists of chlorophylls (a and b) and chlorophyll a/b binding proteins. The cofactor is chlorophyll a. Chlorophyll b serves as cofactor.

The protein resides in the cellular thylakoid membrane. In terms of biological role, the antenna complex functions as a light receptor, it captures and delivers excitation energy to photosystems II and I. The Prochlorales pcb genes are not related to higher plant LHCs. The protein is Chlorophyll a/b light-harvesting protein PcbA (pcbA) of Prochlorothrix hollandica.